The sequence spans 236 residues: Small ribosomal subunit protein uS2c (236 aa).

It belongs to the universal ribosomal protein uS2 family.

Its subcellular location is the plastid. The protein localises to the chloroplast. The chain is Small ribosomal subunit protein uS2c (rps2) from Nymphaea alba (White water-lily).